A 68-amino-acid chain; its full sequence is Alpha-conotoxin-like Ca1.2 (68 aa).

A signal peptide spans Met1–Ser21. Positions Phe22 to Arg48 are excised as a propeptide. Intrachain disulfides connect Cys50–Cys56 and Cys51–Cys64. The tract at residues Ala52–Arg54 is lacks the Ser-Xaa-Pro motif that is crucial for potent interaction with nAChR. A Sulfotyrosine modification is found at Tyr63. Cysteine amide is present on Cys64. A propeptide spanning residues Gly65 to Tyr68 is cleaved from the precursor.

This sequence belongs to the conotoxin A superfamily. In terms of tissue distribution, expressed by the venom duct.

The protein resides in the secreted. Its function is as follows. Alpha-conotoxins act on postsynaptic membranes, they bind to the nicotinic acetylcholine receptors (nAChR) and thus inhibit them. Has possibly a distinct nAChR binding mode from other alpha-conotoxins, due to a different three residue motif (lacks the Ser-Xaa-Pro motif). The polypeptide is Alpha-conotoxin-like Ca1.2 (Conus caracteristicus (Characteristic cone)).